A 155-amino-acid polypeptide reads, in one-letter code: uncharacterized protein (155 aa).

Disordered regions lie at residues 1-22 and 110-155; these read MSSQ…TFTF and NKEP…DTQA. Position 2 is an N-acetylserine (Ser2). Phosphoserine is present on residues Ser136, Ser144, and Ser146. Residues 136–155 are compositionally biased toward acidic residues; that stretch reads SDEDLDAESDSDGEDGDTQA.

This is an uncharacterized protein from Mus musculus (Mouse).